Consider the following 692-residue polypeptide: Structure-specific endonuclease subunit SLX4 (692 aa).

The segment at 39–59 (SDDEDQDEEQETEIPPEEGDD) is disordered.

The protein belongs to the SLX4 family. Forms a heterodimer with SLX1. Post-translationally, phosphorylated in response to DNA damage.

The protein localises to the nucleus. Its function is as follows. Regulatory subunit of the SLX1-SLX4 structure-specific endonuclease that resolves DNA secondary structures generated during DNA repair and recombination. Has endonuclease activity towards branched DNA substrates, introducing single-strand cuts in duplex DNA close to junctions with ss-DNA. This chain is Structure-specific endonuclease subunit SLX4, found in Kluyveromyces lactis (strain ATCC 8585 / CBS 2359 / DSM 70799 / NBRC 1267 / NRRL Y-1140 / WM37) (Yeast).